Reading from the N-terminus, the 503-residue chain is Maturase K (503 aa).

The protein belongs to the intron maturase 2 family. MatK subfamily.

The protein localises to the plastid. It localises to the chloroplast. In terms of biological role, usually encoded in the trnK tRNA gene intron. Probably assists in splicing its own and other chloroplast group II introns. The protein is Maturase K of Kunzea pulchella (Red kunzea).